Consider the following 1480-residue polypeptide: Cystic fibrosis transmembrane conductance regulator (1480 aa).

Residues methionine 1–phenylalanine 77 lie on the Cytoplasmic side of the membrane. Residues phenylalanine 78–glutamine 98 form a helical membrane-spanning segment. The region spanning phenylalanine 81–leucine 365 is the ABC transmembrane type-1 1 domain. Residues proline 99 to tyrosine 122 are Extracellular-facing. Residues leucine 123–histidine 146 form a helical membrane-spanning segment. At histidine 147 to leucine 195 the chain is on the cytoplasmic side. A helical membrane pass occupies residues alanine 196–tryptophan 216. At glutamate 217 to serine 222 the chain is on the extracellular side. A helical membrane pass occupies residues alanine 223–methionine 243. The Cytoplasmic portion of the chain corresponds to methionine 244–lysine 298. Residues alanine 299–phenylalanine 319 traverse the membrane as a helical segment. Topologically, residues leucine 320–threonine 339 are extracellular. A helical transmembrane segment spans residues isoleucine 340–valine 358. At glutamine 359–serine 858 the chain is on the cytoplasmic side. Residues tryptophan 401, serine 434, glycine 458–threonine 465, and glutamine 493 contribute to the ATP site. One can recognise an ABC transporter 1 domain in the interval asparagine 423 to glycine 646. Residue cysteine 524 is the site of S-palmitoyl cysteine attachment. Phosphoserine occurs at positions 549 and 660. The segment at serine 654–glutamate 831 is disordered R region. Position 670 is a phosphoserine; by PKA (serine 670). Serine 686 is subject to Phosphoserine. A Glycyl lysine isopeptide (Lys-Gly) (interchain with G-Cter in ubiquitin) cross-link involves residue lysine 688. Phosphoserine occurs at positions 700 and 712. At threonine 717 the chain carries Phosphothreonine. Phosphoserine occurs at positions 737, 753, 768, 790, 795, and 813. The helical transmembrane segment at leucine 859–valine 879 threads the bilayer. The ABC transmembrane type-1 2 domain occupies leucine 859–serine 1155. Topologically, residues valine 880 to isoleucine 918 are extracellular. 2 N-linked (GlcNAc...) asparagine glycosylation sites follow: asparagine 894 and asparagine 900. A discontinuously helical membrane pass occupies residues tyrosine 919–histidine 939. Over threonine 940 to threonine 990 the chain is Cytoplasmic. A helical transmembrane segment spans residues isoleucine 991–leucine 1011. Residues glutamine 1012–proline 1013 are Extracellular-facing. The chain crosses the membrane as a helical span at residues tyrosine 1014 to leucine 1034. Over glutamine 1035–threonine 1095 the chain is Cytoplasmic. The helical transmembrane segment at leucine 1096–phenylalanine 1116 threads the bilayer. At isoleucine 1117 to glycine 1130 the chain is on the extracellular side. Residues isoleucine 1131–isoleucine 1151 form a helical membrane-spanning segment. Residues aspartate 1152–leucine 1480 lie on the Cytoplasmic side of the membrane. The ABC transporter 2 domain maps to methionine 1210–proline 1443. Residues tyrosine 1219 and glycine 1244–serine 1251 contribute to the ATP site. Residues arginine 1386–leucine 1480 are interaction with GORASP2. A lipid anchor (S-palmitoyl cysteine) is attached at cysteine 1395. 2 positions are modified to phosphoserine: serine 1444 and serine 1456. The interval proline 1451 to leucine 1480 is disordered. Residues glutamate 1470–leucine 1480 are compositionally biased toward acidic residues. The PDZ-binding motif lies at threonine 1478 to leucine 1480.

Belongs to the ABC transporter superfamily. ABCC family. CFTR transporter (TC 3.A.1.202) subfamily. In terms of assembly, monomer; does not require oligomerization for channel activity. May form oligomers in the membrane. Interacts with SLC26A3, SLC26A6 and NHERF1. Interacts with SHANK2. Interacts with MYO6. Interacts (via C-terminus) with GOPC (via PDZ domain); this promotes CFTR internalization and thereby decreases channel activity. Interacts with SLC4A7 through NHERF1. Found in a complex with MYO5B and RAB11A. Interacts with ANO1. Interacts with SLC26A8. Interacts with AHCYL1; the interaction increases CFTR activity. Interacts with CSE1L. The core-glycosylated form interacts with GORASP2 (via PDZ GRASP-type 1 domain) in respone to ER stress. Interacts with MARCHF2; the interaction leads to CFTR ubiqtuitination and degradation. Interacts with ADGRG2. N-glycosylated. In terms of processing, phosphorylated; cAMP treatment promotes phosphorylation and activates the channel. Dephosphorylation decreases the ATPase activity (in vitro). Phosphorylation at PKA sites activates the channel. Phosphorylation at PKC sites enhances the response to phosphorylation by PKA. Phosphorylated by AMPK; this inhibits channel activity. Post-translationally, ubiquitinated, leading to its degradation in the lysosome. Deubiquitination by USP10 in early endosomes enhances its endocytic recycling to the cell membrane. Ubiquitinated by RNF185 during ER stress. Ubiquitinated by MARCHF2.

It is found in the apical cell membrane. Its subcellular location is the early endosome membrane. It localises to the cell membrane. The protein resides in the recycling endosome membrane. The protein localises to the endoplasmic reticulum membrane. It is found in the nucleus. It carries out the reaction ATP + H2O + closed Cl(-) channel = ADP + phosphate + open Cl(-) channel.. The catalysed reaction is chloride(in) = chloride(out). It catalyses the reaction hydrogencarbonate(in) = hydrogencarbonate(out). The enzyme catalyses ATP + H2O = ADP + phosphate + H(+). Epithelial ion channel that plays an important role in the regulation of epithelial ion and water transport and fluid homeostasis. Mediates the transport of chloride ions across the cell membrane. Possesses an intrinsic ATPase activity and utilizes ATP to gate its channel; the passive flow of anions through the channel is gated by cycles of ATP binding and hydrolysis by the ATP-binding domains. The ion channel is also permeable to HCO(3)(-); selectivity depends on the extracellular chloride concentration. Exerts its function also by modulating the activity of other ion channels and transporters. Contributes to the regulation of the pH and the ion content of the epithelial fluid layer. Modulates the activity of the epithelial sodium channel (ENaC) complex, in part by regulating the cell surface expression of the ENaC complex. May regulate bicarbonate secretion and salvage in epithelial cells by regulating the transporter SLC4A7. Can inhibit the chloride channel activity of ANO1. Plays a role in the chloride and bicarbonate homeostasis during sperm epididymal maturation and capacitation. This is Cystic fibrosis transmembrane conductance regulator from Nomascus leucogenys (Northern white-cheeked gibbon).